A 707-amino-acid chain; its full sequence is DNA ligase (707 aa).

NAD(+)-binding positions include 48 to 52, 97 to 98, and Glu134; these read DAEYD and SI. The active-site N6-AMP-lysine intermediate is the Lys136. Positions 157, 193, 320, and 344 each coordinate NAD(+). Zn(2+) is bound by residues Cys438, Cys441, Cys456, and Cys462. In terms of domain architecture, BRCT spans 621–707; the sequence is VAPKPLSGKT…DSPPDERIPA (87 aa).

The protein belongs to the NAD-dependent DNA ligase family. LigA subfamily. The cofactor is Mg(2+). Mn(2+) serves as cofactor.

The enzyme catalyses NAD(+) + (deoxyribonucleotide)n-3'-hydroxyl + 5'-phospho-(deoxyribonucleotide)m = (deoxyribonucleotide)n+m + AMP + beta-nicotinamide D-nucleotide.. Its function is as follows. DNA ligase that catalyzes the formation of phosphodiester linkages between 5'-phosphoryl and 3'-hydroxyl groups in double-stranded DNA using NAD as a coenzyme and as the energy source for the reaction. It is essential for DNA replication and repair of damaged DNA. This Polaromonas naphthalenivorans (strain CJ2) protein is DNA ligase.